Consider the following 2999-residue polypeptide: TPR and ankyrin repeat-containing protein 1 (2999 aa).

Positions 1–87 (MASTTAGRRW…QPRGSTDSAC (87 aa)) are disordered. Residues 19–36 (RGPTPRSRAPGAKLSAPE) are compositionally biased toward low complexity. TPR repeat units lie at residues 144 to 177 (AMLLCNKSNAFYNLGKWNEAFLAAKECLQWDPTY) and 179 to 211 (KGYYRAGYSLLHLLQPYEAARMFFEGLRLLQRS). ANK repeat units follow at residues 297-327 (EKYVFIGFYEKLEQVPKLVQWLVSIGANIET), 328-361 (IGPNPLHALMRLCIQARESQLFRWVMDQKPEWKE), 369-405 (AGCTVLHVAAAHFPGYTSRRQTEDVQMLLSFGADPTL), 538-567 (SQDRPLLMCLRHEDFDLAFLLLTKGADPRS), 572-593 (EGDTPLHAALHIFLDINADIGF), and 621-654 (NGNTLMHLLFQKGMLKRTKKLIDLLVKFDINFNL). Disordered stretches follow at residues 684-722 (RRKNRQDPAAHLGRLSRSSAPGHTSQLKSQTSFKSLPCG), 773-831 (MPLP…GASQ), 1151-1211 (LEVE…GCVP), and 1318-1344 (WEEDDEEVEADGNYNEEEKATETQTGD). Composition is skewed to polar residues over residues 699 to 717 (SRSSAPGHTSQLKSQTSFK) and 801 to 815 (TQRMGSSGCSGNNPV). A compositionally biased stretch (basic and acidic residues) spans 1151 to 1164 (LEVEPGKEGPGREE). The span at 1318–1327 (WEEDDEEVEA) shows a compositional bias: acidic residues. TPR repeat units follow at residues 1772–1805 (PYEWIIQGDYYAKHQCWKVAAKCYQKGDALEKEK) and 1866–1899 (LGKIRDAAYFYKRSQCFQDAFRCFEQIQEFDLAL).

As to expression, expressed only in the brain. Detected in the hippocampus, hypothalamus and cingulate gyrus.

This Mus musculus (Mouse) protein is TPR and ankyrin repeat-containing protein 1 (Trank1).